Reading from the N-terminus, the 250-residue chain is MWQLLPPAALLLLVSADTQTADPSKAVVLLDPQWNHVLTNDRVTLKCQGDYPVEDNSTKWWHNGTLISSQTPSYFIADVKVQDSGEYKCQTGLSAPSDPVKLEVHVGWLLLQVAQRVVNVGKPIRLKCHSWKKTPVAKVQYFRNGRGKKYSHGNSDFHIPEAKLEHSGSYFCRGIIGSKNESSESVQITVQAPETLQTVSSFFLPWHQITFCLVMGVLFAVDTGLYFSVRRHLQSSEEWRDGKVTWSKGP.

A signal peptide spans 1–16 (MWQLLPPAALLLLVSA). Residues 17 to 208 (DTQTADPSKA…VSSFFLPWHQ (192 aa)) lie on the Extracellular side of the membrane. Ig-like C2-type domains follow at residues 23 to 105 (PSKA…LEVH) and 99 to 189 (PVKL…VQIT). Disulfide bonds link Cys-47/Cys-89 and Cys-128/Cys-172. 2 N-linked (GlcNAc...) asparagine glycosylation sites follow: Asn-56 and Asn-63. Residue Asn-180 is glycosylated (N-linked (GlcNAc...) asparagine). A helical transmembrane segment spans residues 209–225 (ITFCLVMGVLFAVDTGL). Topologically, residues 226 to 250 (YFSVRRHLQSSEEWRDGKVTWSKGP) are cytoplasmic.

As to quaternary structure, forms a heterooligomeric complex with ITAM-containing signaling subunits FCER1G. Interacts (via transmembrane domain) with signaling subunits; this interaction is a prerequisite for receptor complex expression on the cell surface and intracellular signal transduction. Binds the Fc region of antigen-complexed IgG. As to expression, expressed in gamma-delta T cells.

It localises to the cell membrane. Its function is as follows. Receptor for the invariable Fc fragment of immunoglobulin gamma (IgG). Optimally activated upon binding of clustered antigen-IgG complexes displayed on cell surfaces, triggers lysis of antibody-coated cells, a process known as antibody-dependent cellular cytotoxicity (ADCC). Does not bind free monomeric IgG, thus avoiding inappropriate effector cell activation in the absence of antigenic trigger. Mediates IgG effector functions on natural killer (NK) cells. Binds antigen-IgG complexes generated upon infection and triggers NK cell-dependent cytokine production and degranulation to limit viral load and propagation. Fc-binding subunit that associates with FCER1G adapters to form functional signaling complexes. Following the engagement of antigen-IgG complexes, triggers phosphorylation of immunoreceptor tyrosine-based activation motif (ITAM)-containing adapter with subsequent activation of phosphatidylinositol 3-kinase signaling and sustained elevation of intracellular calcium that ultimately drive NK cell activation. Mediates enhanced ADCC in response to afucosylated IgGs. The sequence is that of Low affinity immunoglobulin gamma Fc region receptor III-A from Bos taurus (Bovine).